The primary structure comprises 505 residues: Trans-cinnamate 4-monooxygenase (505 aa).

Residues 3 to 23 traverse the membrane as a helical segment; sequence LILLEKSLLAVFFAVIFSIIV. Residues 213–218 and alanine 306 contribute to the (E)-cinnamate site; that span reads RSRLAQ. Cysteine 447 is a binding site for heme.

Belongs to the cytochrome P450 family. It depends on heme as a cofactor. As to expression, mostly expressed in stems, and, to a lower extent, in bulbs, roots, leaves and flowers.

The protein resides in the membrane. It catalyses the reaction (E)-cinnamate + reduced [NADPH--hemoprotein reductase] + O2 = (E)-4-coumarate + oxidized [NADPH--hemoprotein reductase] + H2O + H(+). The protein operates within alkaloid biosynthesis. Its pathway is phenylpropanoid metabolism; trans-4-coumarate biosynthesis; trans-4-coumarate from trans-cinnamate: step 1/1. Catalyzes the first oxidative step of the phenylpropanoid pathway in higher plants by transforming trans-cinnamate into p-coumarate. The compounds formed by this pathway are essential components for lignification, pollination, and defense against ultraviolet light, predators and pathogens. Trans-4-coumarate is a precursor to all amaryllidaceae alkaloids such as galanthamine, lycorine and haemanthamine, and including haemanthamine- and crinamine-type alkaloids, promising anticancer agents. The sequence is that of Trans-cinnamate 4-monooxygenase from Narcissus pseudonarcissus (Daffodil).